We begin with the raw amino-acid sequence, 386 residues long: Succinate--CoA ligase [ADP-forming] subunit beta (386 aa).

The 236-residue stretch at 9 to 244 (KELLRDYGVP…LNEEDEKEIE (236 aa)) folds into the ATP-grasp domain. ATP is bound by residues Lys46, 53 to 55 (GRG), Glu99, Cys102, and Glu107. Mg(2+) contacts are provided by Asn199 and Asp213. Substrate-binding positions include Asn264 and 321-323 (GIM).

It belongs to the succinate/malate CoA ligase beta subunit family. Heterotetramer of two alpha and two beta subunits. Mg(2+) serves as cofactor.

The enzyme catalyses succinate + ATP + CoA = succinyl-CoA + ADP + phosphate. It carries out the reaction GTP + succinate + CoA = succinyl-CoA + GDP + phosphate. It functions in the pathway carbohydrate metabolism; tricarboxylic acid cycle; succinate from succinyl-CoA (ligase route): step 1/1. Its function is as follows. Succinyl-CoA synthetase functions in the citric acid cycle (TCA), coupling the hydrolysis of succinyl-CoA to the synthesis of either ATP or GTP and thus represents the only step of substrate-level phosphorylation in the TCA. The beta subunit provides nucleotide specificity of the enzyme and binds the substrate succinate, while the binding sites for coenzyme A and phosphate are found in the alpha subunit. The sequence is that of Succinate--CoA ligase [ADP-forming] subunit beta from Alkaliphilus oremlandii (strain OhILAs) (Clostridium oremlandii (strain OhILAs)).